Reading from the N-terminus, the 325-residue chain is Protease HtpX homolog 2 (325 aa).

2 consecutive transmembrane segments (helical) span residues 17-37 (IAIL…FFGF) and 42-62 (LLIT…WLFG). Residue His146 participates in Zn(2+) binding. Glu147 is a catalytic residue. His150 contributes to the Zn(2+) binding site. 2 consecutive transmembrane segments (helical) span residues 158–178 (LLLA…GLWW) and 195–215 (ILFL…LFVL). Glu222 is a binding site for Zn(2+).

Belongs to the peptidase M48B family. The cofactor is Zn(2+).

It localises to the cell membrane. The protein is Protease HtpX homolog 2 of Sulfurisphaera tokodaii (strain DSM 16993 / JCM 10545 / NBRC 100140 / 7) (Sulfolobus tokodaii).